A 320-amino-acid chain; its full sequence is Glycerol-3-phosphate dehydrogenase [NAD(P)+] (320 aa).

The NADPH site is built by F11, R30, and K102. Residues K102, G130, and S132 each contribute to the sn-glycerol 3-phosphate site. Residue A134 coordinates NADPH. Residues K185, D238, S248, R249, and N250 each contribute to the sn-glycerol 3-phosphate site. The Proton acceptor role is filled by K185. R249 is a binding site for NADPH. Residue E270 participates in NADPH binding.

The protein belongs to the NAD-dependent glycerol-3-phosphate dehydrogenase family.

It localises to the cytoplasm. It carries out the reaction sn-glycerol 3-phosphate + NAD(+) = dihydroxyacetone phosphate + NADH + H(+). It catalyses the reaction sn-glycerol 3-phosphate + NADP(+) = dihydroxyacetone phosphate + NADPH + H(+). It participates in membrane lipid metabolism; glycerophospholipid metabolism. Functionally, catalyzes the reduction of the glycolytic intermediate dihydroxyacetone phosphate (DHAP) to sn-glycerol 3-phosphate (G3P), the key precursor for phospholipid synthesis. This Ruegeria sp. (strain TM1040) (Silicibacter sp.) protein is Glycerol-3-phosphate dehydrogenase [NAD(P)+].